A 346-amino-acid chain; its full sequence is RNA-directed DNA methylation 4 (346 aa).

Residue Met1 is modified to N-acetylmethionine. Composition is skewed to acidic residues over residues Phe253 to Asn268, Pro278 to Glu312, and Gly323 to Glu332. The tract at residues Phe253–Ser346 is disordered.

It belongs to the IWR1/SLC7A6OS family. Interacts with NRPD1. Associates with Pol II and Pol V complexes.

Probable regulatory factor for several RNA polymerases. Effector involved in facilitation of Pol V transcription as RNA scaffold and recruitment of silencing complex to target genomic sites. The polypeptide is RNA-directed DNA methylation 4 (RDM4) (Arabidopsis thaliana (Mouse-ear cress)).